A 651-amino-acid chain; its full sequence is Acetyl-coenzyme A synthetase (651 aa).

CoA contacts are provided by residues 190-193 (RRGK) and Thr311. Residues 387-389 (GEP), 411-416 (DTWWQT), Asp508, and Arg523 each bind ATP. Ser531 is a CoA binding site. Position 534 (Arg534) interacts with ATP. Positions 545, 547, and 550 each coordinate Mg(2+). At Lys617 the chain carries N6-acetyllysine.

This sequence belongs to the ATP-dependent AMP-binding enzyme family. Requires Mg(2+) as cofactor. Acetylated. Deacetylation by the SIR2-homolog deacetylase activates the enzyme.

It carries out the reaction acetate + ATP + CoA = acetyl-CoA + AMP + diphosphate. Functionally, catalyzes the conversion of acetate into acetyl-CoA (AcCoA), an essential intermediate at the junction of anabolic and catabolic pathways. AcsA undergoes a two-step reaction. In the first half reaction, AcsA combines acetate with ATP to form acetyl-adenylate (AcAMP) intermediate. In the second half reaction, it can then transfer the acetyl group from AcAMP to the sulfhydryl group of CoA, forming the product AcCoA. M.tuberculosis may use AcsA for both acetate and propionate assimilation. The sequence is that of Acetyl-coenzyme A synthetase from Mycobacterium tuberculosis (strain CDC 1551 / Oshkosh).